Consider the following 265-residue polypeptide: Novel plant SNARE 11 (265 aa).

The Cytoplasmic portion of the chain corresponds to Met-1–Cys-215. A coiled-coil region spans residues Gln-30 to Ala-75. A t-SNARE coiled-coil homology domain is found at Asn-144–Ile-206. A helical; Anchor for type IV membrane protein membrane pass occupies residues Ile-216–Val-236. At Asn-237 to Tyr-265 the chain is on the vesicular side.

Belongs to the novel plant SNARE family. In terms of assembly, interacts with KNOLLE to form a t-SNARE complex. Does not interact with SYP21, VTI12 or VPS45. In terms of tissue distribution, expressed in roots, stems, flower, siliques, expanding leaves, but not in mature leaves. Not limited to dividing cells.

The protein localises to the membrane. T-SNARE involved in diverse vesicle trafficking and membrane fusion processes, including cell plate formation. This is Novel plant SNARE 11 (NPSN11) from Arabidopsis thaliana (Mouse-ear cress).